Reading from the N-terminus, the 346-residue chain is [LysW]-lysine/[LysW]-ornithine hydrolase (346 aa).

His68 contributes to the Zn(2+) binding site. Asp70 is a catalytic residue. Asp92 contributes to the Zn(2+) binding site. Glu122 functions as the Proton acceptor in the catalytic mechanism. Positions 123, 146, and 317 each coordinate Zn(2+).

Belongs to the peptidase M20A family. LysK subfamily. Zn(2+) is required as a cofactor. Co(2+) serves as cofactor.

The protein resides in the cytoplasm. The catalysed reaction is [amino-group carrier protein]-C-terminal-gamma-(L-lysyl)-L-glutamate + H2O = [amino-group carrier protein]-C-terminal-L-glutamate + L-lysine. The enzyme catalyses [amino-group carrier protein]-C-terminal-gamma-(L-ornithyl)-L-glutamate + H2O = [amino-group carrier protein]-C-terminal-L-glutamate + L-ornithine. It participates in amino-acid biosynthesis; L-lysine biosynthesis via AAA pathway; L-lysine from L-alpha-aminoadipate (Thermus route): step 5/5. It functions in the pathway amino-acid biosynthesis; L-arginine biosynthesis. Functionally, catalyzes the release of L-lysine from [LysW]-gamma-L-lysine and the release of L-ornithine from [LysW]-L-ornithine. The chain is [LysW]-lysine/[LysW]-ornithine hydrolase from Saccharolobus islandicus (strain M.16.4 / Kamchatka #3) (Sulfolobus islandicus).